Reading from the N-terminus, the 327-residue chain is BarH-like 1 homeobox protein (327 aa).

3 disordered regions span residues 1 to 90 (MEGS…AQSR), 112 to 184 (APYS…ARTA), and 305 to 327 (GASE…AQPR). Positions 33–54 (RSPLELSPRSESSSDCSSPASP) are enriched in low complexity. The span at 79-90 (QPGQLSAPAQSR) shows a compositional bias: polar residues. Basic and acidic residues-rich tracts occupy residues 133-143 (AAEDFRDKLDK) and 152-166 (SEYK…EISS). The segment at residues 178 to 237 (PRKARTAFTDHQLAQLERSFERQKYLSVQDRMELAASLNLTDTQVKTWYQNRRTKWKRQT) is a DNA-binding region (homeobox). Residues 316-327 (LAGVLPRAAQPR) show a composition bias toward low complexity.

It belongs to the BAR homeobox family.

It localises to the nucleus. The protein is BarH-like 1 homeobox protein (BARHL1) of Homo sapiens (Human).